Consider the following 645-residue polypeptide: Exoribonuclease 2 (645 aa).

Residues 191–517 (REDLTELNFI…MNHRLLKALI (327 aa)) enclose the RNB domain. Residues 563-645 (HIRYSAEIID…DNRSIIAKIV (83 aa)) form the S1 motif domain.

Belongs to the RNR ribonuclease family. RNase II subfamily.

It is found in the cytoplasm. It carries out the reaction Exonucleolytic cleavage in the 3'- to 5'-direction to yield nucleoside 5'-phosphates.. Functionally, involved in mRNA degradation. Hydrolyzes single-stranded polyribonucleotides processively in the 3' to 5' direction. The polypeptide is Exoribonuclease 2 (Baumannia cicadellinicola subsp. Homalodisca coagulata).